Consider the following 510-residue polypeptide: GMP synthase [glutamine-hydrolyzing] (510 aa).

The region spanning 5–195 (LVIVVDFGGQ…LFDICNLKGD (191 aa)) is the Glutamine amidotransferase type-1 domain. Cys82 serves as the catalytic Nucleophile. Residues His169 and Glu171 contribute to the active site. The GMPS ATP-PPase domain occupies 196 to 385 (WSMSSFVDEK…LGIPHKLVWR (190 aa)). Position 223-229 (223-229 (SGGVDSS)) interacts with ATP.

Homodimer.

The catalysed reaction is XMP + L-glutamine + ATP + H2O = GMP + L-glutamate + AMP + diphosphate + 2 H(+). The protein operates within purine metabolism; GMP biosynthesis; GMP from XMP (L-Gln route): step 1/1. Its function is as follows. Catalyzes the synthesis of GMP from XMP. The chain is GMP synthase [glutamine-hydrolyzing] from Clostridium kluyveri (strain NBRC 12016).